A 289-amino-acid polypeptide reads, in one-letter code: Nucleotide-binding protein FRAAL4592 (289 aa).

13 to 20 (GLSGAGRS) lines the ATP pocket. 64–67 (DVRG) is a GTP binding site.

This sequence belongs to the RapZ-like family.

Its function is as follows. Displays ATPase and GTPase activities. In Frankia alni (strain DSM 45986 / CECT 9034 / ACN14a), this protein is Nucleotide-binding protein FRAAL4592.